The chain runs to 119 residues: Large ribosomal subunit protein uL18 (119 aa).

It belongs to the universal ribosomal protein uL18 family. Part of the 50S ribosomal subunit; part of the 5S rRNA/L5/L18/L25 subcomplex. Contacts the 5S and 23S rRNAs.

Its function is as follows. This is one of the proteins that bind and probably mediate the attachment of the 5S RNA into the large ribosomal subunit, where it forms part of the central protuberance. This chain is Large ribosomal subunit protein uL18, found in Chlorobium luteolum (strain DSM 273 / BCRC 81028 / 2530) (Pelodictyon luteolum).